The sequence spans 2070 residues: Multiple PDZ domain protein (2070 aa).

One can recognise an L27 domain in the interval 1–63; that stretch reads MLEAIDKNRA…SVQQLKDQVN (63 aa). Positions 137–224 constitute a PDZ 1 domain; sequence VFELLKPPSG…TVQLVIARGS (88 aa). The residue at position 230 (Ser-230) is a Phosphoserine. PDZ domains are found at residues 257–337 and 377–463; these read TIEL…ARGA and DVEL…MRRG. Ser-483 carries the post-translational modification Phosphoserine. 2 consecutive PDZ domains span residues 553–634 and 700–786; these read VAHV…CRRT and HIEL…VAKP. Residues Ser-790 and Ser-1078 each carry the phosphoserine modification. A PDZ 6 domain is found at 1008–1089; the sequence is TINIAKGNSS…IGPDIKITYV (82 aa). The tract at residues 1121-1140 is disordered; the sequence is DIPELPEREEGEGEESELQN. The PDZ 7 domain occupies 1151 to 1243; sequence RVELWREPSK…PVVFMVQSII (93 aa). The residue at position 1170 (Arg-1170) is an Omega-N-methylarginine. The disordered stretch occupies residues 1278–1324; the sequence is ADKAPSQSESEPEKAPLCSVPPPPPSAFAEMGSDHTQSSASKISQDV. Polar residues predominate over residues 1311-1321; it reads DHTQSSASKIS. PDZ domains lie at 1350–1433 and 1483–1564; these read MIEL…IRNK and HLEL…HAEN. The interval 1567–1612 is disordered; it reads SQAVPSAAGAASGEKKNSSQSLMVPQSGSPEPESIRNTSRSSTPAI. Polar residues predominate over residues 1584–1610; it reads SSQSLMVPQSGSPEPESIRNTSRSSTP. PDZ domains lie at 1629–1712 and 1725–1807; these read TIEI…YRDE and TIEL…GRIK. 2 positions are modified to phosphoserine: Ser-1818 and Ser-1824. PDZ domains are found at residues 1862–1948 and 1987–2070; these read TVEM…VAGG and SITL…MVLS.

Interacts with CLDN5, DLG4, GRIN1, F11R/JAM, CLDN1, NG2, CRB1, MPP4 and PALS1. Interacts with HTR2A, HTR2B, HTR2C, PLEKHA1/TAPP1, PLEKHA2/TAPP2, CXADR, SYNGAP1, CAMK2A and CAMK2B. Interacts with FAT4 (via cytoplasmic domain). Interacts with DLL1. As to quaternary structure, (Microbial infection) Interacts with human adenovirus type 9 E4-ORF1 protein. In terms of assembly, (Microbial infection) Interacts with human papillomavirus 18/HPV18 protein E6. In terms of tissue distribution, expressed in heart, brain, placenta, liver, skeletal muscle, kidney and pancreas.

The protein resides in the cell membrane. It is found in the apical cell membrane. Its subcellular location is the postsynaptic density. It localises to the cell projection. The protein localises to the dendrite. The protein resides in the cell junction. It is found in the tight junction. Its subcellular location is the synapse. It localises to the synaptosome. Its function is as follows. Member of the NMDAR signaling complex that may play a role in control of AMPAR potentiation and synaptic plasticity in excitatory synapses. Promotes clustering of HT2RC at the cell surface. The protein is Multiple PDZ domain protein (MPDZ) of Homo sapiens (Human).